The chain runs to 641 residues: Phosphomethylpyrimidine synthase (641 aa).

The segment covering 1–12 has biased composition (polar residues); that stretch reads MTDTSTQNTATP. Residues 1–25 are disordered; the sequence is MTDTSTQNTATPTDEYGAEIHPKHS. Substrate is bound by residues Asn-200, Met-229, Tyr-258, His-294, 314–316, 355–358, and Glu-394; these read SRG and DGLR. His-398 contributes to the Zn(2+) binding site. Tyr-421 contacts substrate. Residue His-462 coordinates Zn(2+). 3 residues coordinate [4Fe-4S] cluster: Cys-542, Cys-545, and Cys-550.

This sequence belongs to the ThiC family. Requires [4Fe-4S] cluster as cofactor.

The enzyme catalyses 5-amino-1-(5-phospho-beta-D-ribosyl)imidazole + S-adenosyl-L-methionine = 4-amino-2-methyl-5-(phosphooxymethyl)pyrimidine + CO + 5'-deoxyadenosine + formate + L-methionine + 3 H(+). Its pathway is cofactor biosynthesis; thiamine diphosphate biosynthesis. Its function is as follows. Catalyzes the synthesis of the hydroxymethylpyrimidine phosphate (HMP-P) moiety of thiamine from aminoimidazole ribotide (AIR) in a radical S-adenosyl-L-methionine (SAM)-dependent reaction. The polypeptide is Phosphomethylpyrimidine synthase (Corynebacterium jeikeium (strain K411)).